Here is a 160-residue protein sequence, read N- to C-terminus: Phosphopantetheine adenylyltransferase (160 aa).

Residue Thr11 coordinates substrate. Residues 11–12 (TF) and His19 contribute to the ATP site. Residues Lys43, Thr75, and Arg89 each coordinate substrate. Residues 90–92 (GLR), Glu100, and 125–131 (YSFLSSS) contribute to the ATP site.

This sequence belongs to the bacterial CoaD family. Homohexamer. The cofactor is Mg(2+).

The protein localises to the cytoplasm. It carries out the reaction (R)-4'-phosphopantetheine + ATP + H(+) = 3'-dephospho-CoA + diphosphate. It participates in cofactor biosynthesis; coenzyme A biosynthesis; CoA from (R)-pantothenate: step 4/5. Functionally, reversibly transfers an adenylyl group from ATP to 4'-phosphopantetheine, yielding dephospho-CoA (dPCoA) and pyrophosphate. The protein is Phosphopantetheine adenylyltransferase of Listeria monocytogenes serovar 1/2a (strain ATCC BAA-679 / EGD-e).